The following is a 432-amino-acid chain: 3-phosphoshikimate 1-carboxyvinyltransferase (432 aa).

3-phosphoshikimate is bound by residues Lys-22, Ser-23, and Arg-27. Lys-22 provides a ligand contact to phosphoenolpyruvate. 2 residues coordinate phosphoenolpyruvate: Gly-96 and Arg-127. Ser-173, Ser-174, Gln-175, Ser-201, Asp-316, Asn-339, and Lys-343 together coordinate 3-phosphoshikimate. Gln-175 is a binding site for phosphoenolpyruvate. Asp-316 (proton acceptor) is an active-site residue. Positions 347, 391, and 416 each coordinate phosphoenolpyruvate.

It belongs to the EPSP synthase family. In terms of assembly, monomer.

Its subcellular location is the cytoplasm. It carries out the reaction 3-phosphoshikimate + phosphoenolpyruvate = 5-O-(1-carboxyvinyl)-3-phosphoshikimate + phosphate. It participates in metabolic intermediate biosynthesis; chorismate biosynthesis; chorismate from D-erythrose 4-phosphate and phosphoenolpyruvate: step 6/7. In terms of biological role, catalyzes the transfer of the enolpyruvyl moiety of phosphoenolpyruvate (PEP) to the 5-hydroxyl of shikimate-3-phosphate (S3P) to produce enolpyruvyl shikimate-3-phosphate and inorganic phosphate. The polypeptide is 3-phosphoshikimate 1-carboxyvinyltransferase (Haemophilus influenzae (strain ATCC 51907 / DSM 11121 / KW20 / Rd)).